The primary structure comprises 373 residues: Ferroptosis suppressor protein 1 (373 aa).

Gly2 is lipidated: N-myristoyl glycine. A helical membrane pass occupies residues 7-27 (VESGALHVVIVGGGFGGIAAA). 6-hydroxy-FAD contacts are provided by residues 18–22 (GGGFG), Arg54, and Val82. An N6-acetyllysine; by KAT2B modification is found at Lys168. Position 285 (Asp285) interacts with 6-hydroxy-FAD.

It belongs to the FAD-dependent oxidoreductase family. As to quaternary structure, interacts with importin subunits KPNA2 and IPO5; this interaction likely mediates the translocation into the nucleus upon oxidative stress. The cofactor is 6-hydroxy-FAD. N-myristoylation at Gly-2 mediates the recruitment to lipid droplets and plasma membrane, enabling its anti-lipid peroxidation activity. In terms of processing, acetylation at Lys-168 prevents AIFM2 ubiquitination and degradation, thereby inhibiting ferroptosis. KAT2B mediates acetylation at Lys-168, while HDAC3 removes it. Post-translationally, ubiquitinated. AIFM2 undergoes 'Lys-29'-ubiquitination and proteasomal degradation, which is inhibited by acetylation at Lys-168. In terms of tissue distribution, detected in most normal tissues as two transcripts of 1.8 and 4.0 kb in length, respectively. Highly expressed in heart, moderately in liver and skeletal muscles, and expressed at low levels in placenta, lung, kidney, and pancreas. Both transcripts expressed following p53/TP53 induction. The shorter 1.8 kb transcript seems to be the major transcript in EB1 colon cancer cells.

The protein resides in the lipid droplet. It is found in the cell membrane. It localises to the cytoplasm. Its subcellular location is the mitochondrion membrane. The protein localises to the nucleus. It carries out the reaction ubiquinone-10 + NADH + H(+) = ubiquinol-10 + NAD(+). The enzyme catalyses phylloquinone + NADH + H(+) = phylloquinol + NAD(+). The catalysed reaction is menaquinone-4 + NADH + H(+) = menaquinol-4 + NAD(+). It catalyses the reaction menadione + NADH + H(+) = menadiol + NAD(+). With respect to regulation, the modification by 4-hydroxy-2-nonenal (HNE) adduction in mitochondria results in loss of the oxidoreductase activity and activation of a novel function in mitochondrial oxidative stress signaling. In terms of biological role, a NAD(P)H-dependent oxidoreductase that acts as a key inhibitor of ferroptosis. At the plasma membrane, catalyzes reduction of coenzyme Q/ubiquinone-10 to ubiquinol-10, a lipophilic radical-trapping antioxidant that prevents lipid oxidative damage and consequently ferroptosis. Acts in parallel to GPX4 to suppress phospholipid peroxidation and ferroptosis. This anti-ferroptotic function is independent of cellular glutathione levels. Also acts as a potent radical-trapping antioxidant by mediating warfarin-resistant vitamin K reduction in the canonical vitamin K cycle: catalyzes NAD(P)H-dependent reduction of vitamin K (phylloquinone, menaquinone-4 and menadione) to hydroquinone forms. Hydroquinones act as potent radical-trapping antioxidants inhibitor of phospholipid peroxidation and ferroptosis. May play a role in mitochondrial stress signaling. Upon oxidative stress, associates with the lipid peroxidation end product 4-hydroxy-2-nonenal (HNE) forming a lipid adduct devoid of oxidoreductase activity, which then translocates from mitochondria into the nucleus triggering DNA damage and cell death. Capable of DNA binding in a non-sequence specific way. This is Ferroptosis suppressor protein 1 from Homo sapiens (Human).